Reading from the N-terminus, the 656-residue chain is 1-deoxy-D-xylulose-5-phosphate synthase 1 (656 aa).

Residues H73 and 113–115 (SHA) each bind thiamine diphosphate. Residue D144 participates in Mg(2+) binding. Residues 145–146 (GA), N174, Y285, and E367 contribute to the thiamine diphosphate site. A Mg(2+)-binding site is contributed by N174. The tract at residues 625–656 (AGDRAGGPAVEQPGDGRMSGDGRIVMPAQGEN) is disordered.

It belongs to the transketolase family. DXPS subfamily. Homodimer. Mg(2+) is required as a cofactor. It depends on thiamine diphosphate as a cofactor.

The enzyme catalyses D-glyceraldehyde 3-phosphate + pyruvate + H(+) = 1-deoxy-D-xylulose 5-phosphate + CO2. It functions in the pathway metabolic intermediate biosynthesis; 1-deoxy-D-xylulose 5-phosphate biosynthesis; 1-deoxy-D-xylulose 5-phosphate from D-glyceraldehyde 3-phosphate and pyruvate: step 1/1. Functionally, catalyzes the acyloin condensation reaction between C atoms 2 and 3 of pyruvate and glyceraldehyde 3-phosphate to yield 1-deoxy-D-xylulose-5-phosphate (DXP). The sequence is that of 1-deoxy-D-xylulose-5-phosphate synthase 1 from Streptomyces coelicolor (strain ATCC BAA-471 / A3(2) / M145).